Consider the following 267-residue polypeptide: Nus factor SuhB (267 aa).

3 residues coordinate Mg(2+): Glu67, Asp84, and Leu86. Residue Glu67 coordinates substrate. Substrate is bound by residues 86 to 89 (LDGT), Arg183, and Asp212.

It belongs to the inositol monophosphatase superfamily. Homodimer. The rRNA transcription and antitermination complex (rrnTAC) consists of RNA polymerase (RNAP), NusA, NusB, NusE (rpsJ), NusG, SubB, ribosomal protein S4, DNA and precursor rRNA; S4 is more flexible than other subunits. Mg(2+) is required as a cofactor.

The protein localises to the cytoplasm. It carries out the reaction a myo-inositol phosphate + H2O = myo-inositol + phosphate. Part of the processive rRNA transcription and antitermination complex (rrnTAC). The complex forms an RNA-chaperone ring around the RNA exit tunnel of RNA polymerase (RNAP). It supports rapid transcription and antitermination of rRNA operons, cotranscriptional rRNA folding, and annealing of distal rRNA regions to allow correct ribosome biogenesis. This subunit may play a central role in organizing the structure. This chain is Nus factor SuhB, found in Vibrio cholerae serotype O1 (strain ATCC 39315 / El Tor Inaba N16961).